Here is a 310-residue protein sequence, read N- to C-terminus: MISEKAATALATIATVCWCVQLIPQIIYNWKKKDCTGLPPLMMFLWVVSGIPFAIYFCVSKGNVILQVQPHLFMFFCSISFVQSCYYPPISMARSKIVMIVAAIIAADVGMEVGFILWLRPLYEKGVKWPDLIFGISASVLLAVGLLPPYFELAKRKGRVIGINFAFLFIDSLGAWLSIISVILGNMDIMGIILYSIVAGMELGIFASHFIWWCRFRFLAKGNTFDEESGQAQKEEPDEKIEQDISKSDRNVTNYNLDNCSIPDDASSFADDFNIYDSTDGGTLSRAQTLHAVHGVVVRTDPDRYSRLSV.

Topologically, residues 1–6 (MISEKA) are cytoplasmic. One can recognise a PQ-loop 1 domain in the interval 5-69 (KAATALATIA…SKGNVILQVQ (65 aa)). A helical transmembrane segment spans residues 7–27 (ATALATIATVCWCVQLIPQII). The Extracellular segment spans residues 28–36 (YNWKKKDCT). Residues 37–57 (GLPPLMMFLWVVSGIPFAIYF) form a helical membrane-spanning segment. Topologically, residues 58–61 (CVSK) are cytoplasmic. A helical membrane pass occupies residues 62-82 (GNVILQVQPHLFMFFCSISFV). Topologically, residues 83-96 (QSCYYPPISMARSK) are extracellular. The chain crosses the membrane as a helical span at residues 97–117 (IVMIVAAIIAADVGMEVGFIL). The Cytoplasmic segment spans residues 118-131 (WLRPLYEKGVKWPD). Residues 132–152 (LIFGISASVLLAVGLLPPYFE) form a helical membrane-spanning segment. The 57-residue stretch at 138 to 194 (ASVLLAVGLLPPYFELAKRKGRVIGINFAFLFIDSLGAWLSIISVILGNMDIMGIIL) folds into the PQ-loop 2 domain. Topologically, residues 153–164 (LAKRKGRVIGIN) are extracellular. Residues 165–185 (FAFLFIDSLGAWLSIISVILG) traverse the membrane as a helical segment. Topologically, residues 186–191 (NMDIMG) are cytoplasmic. The helical transmembrane segment at 192–212 (IILYSIVAGMELGIFASHFIW) threads the bilayer. Topologically, residues 213-310 (WCRFRFLAKG…DPDRYSRLSV (98 aa)) are extracellular. Residue Ser229 is modified to Phosphoserine. Residues Asn251 and Asn259 are each glycosylated (N-linked (GlcNAc...) asparagine).

It is found in the cell membrane. This is an uncharacterized protein from Saccharomyces cerevisiae (strain ATCC 204508 / S288c) (Baker's yeast).